The sequence spans 244 residues: Leucyl/phenylalanyl-tRNA--protein transferase (244 aa).

It belongs to the L/F-transferase family.

The protein resides in the cytoplasm. It catalyses the reaction N-terminal L-lysyl-[protein] + L-leucyl-tRNA(Leu) = N-terminal L-leucyl-L-lysyl-[protein] + tRNA(Leu) + H(+). The catalysed reaction is N-terminal L-arginyl-[protein] + L-leucyl-tRNA(Leu) = N-terminal L-leucyl-L-arginyl-[protein] + tRNA(Leu) + H(+). The enzyme catalyses L-phenylalanyl-tRNA(Phe) + an N-terminal L-alpha-aminoacyl-[protein] = an N-terminal L-phenylalanyl-L-alpha-aminoacyl-[protein] + tRNA(Phe). Its function is as follows. Functions in the N-end rule pathway of protein degradation where it conjugates Leu, Phe and, less efficiently, Met from aminoacyl-tRNAs to the N-termini of proteins containing an N-terminal arginine or lysine. The sequence is that of Leucyl/phenylalanyl-tRNA--protein transferase from Janthinobacterium sp. (strain Marseille) (Minibacterium massiliensis).